The sequence spans 1236 residues: Structural polyprotein (1236 aa).

Positions 1-36 (MFPYPQLNFPPVYPTNPMAYRDPNPPRCRWRPFRPP) are necessary for nucleocapsid assembly and virus assembly. A host transcription inhibition region spans residues 37–70 (LAAQIEDLRRSIANLTFKQRSPNPPPGPPPKKKK). The Supraphysiological nuclear export signal signature appears at 44-51 (LRRSIANL). The segment at 44–103 (LRRSIANLTFKQRSPNPPPGPPPKKKKSAPKPKPTQPKKKKQQAKKTKRKPKPGKRQRMC) is disordered. Residues 66–102 (PKKKKSAPKPKPTQPKKKKQQAKKTKRKPKPGKRQRM) are compositionally biased toward basic residues. The short motif at 67 to 70 (KKKK) is the Nuclear localization signal element. The tract at residues 83 to 111 (KKQQAKKTKRKPKPGKRQRMCMKLESDKT) is binding to the viral RNA. The ribosome-binding stretch occupies residues 96-110 (PGKRQRMCMKLESDK). Ser-108 carries the post-translational modification Phosphoserine. Positions 110 to 259 (KTFPIMLNGQ…KDTPEGSEPW (150 aa)) constitute a Peptidase S3 domain. Thr-111 bears the Phosphothreonine mark. Catalysis depends on His-136, which acts as the Charge relay system. Positions 152 to 157 (KKASMY) are interaction with spike glycoprotein E2. Catalysis depends on charge relay system residues Asp-158 and Ser-210. Residues 244–248 (QKGVT) are interaction with spike glycoprotein E2. The tract at residues 260-271 (SLVTALCVLSNV) is functions as an uncleaved signal peptide for the precursor of protein E3/E2. Topologically, residues 260-687 (SLVTALCVLS…YYHRHPVYTV (428 aa)) are extracellular. 7 cysteine pairs are disulfide-bonded: Cys-266-Cys-275, Cys-335-Cys-443, Cys-338-Cys-344, Cys-410-Cys-424, Cys-471-Cys-585, Cys-520-Cys-545, and Cys-522-Cys-539. N-linked (GlcNAc...) asparagine; by host glycosylation occurs at Asn-270. N-linked (GlcNAc...) asparagine; by host glycosylation is present at Asn-515. Asn-637 is a glycosylation site (N-linked (GlcNAc...) asparagine; by host). A helical transmembrane segment spans residues 688–708 (IVLCGVALAILVGTASSAACI). The Cytoplasmic portion of the chain corresponds to 709 to 742 (AKARRDCLTPYALAPNATVPTALAVLCCIRPTNA). An interaction with the capsid protein region spans residues 710–714 (KARRD). Residues Cys-715, Cys-735, and Cys-736 are each lipidated (S-palmitoyl cysteine; by host). The cysteines at positions 715 and 736 are disulfide-linked. The interval 717 to 737 (TPYALAPNATVPTALAVLCCI) is transient transmembrane before p62-6K protein processing. Residues 743–767 (ETFGETLNHLWFNNQPFLWAQLCIP) are Extracellular-facing. A run of 2 helical transmembrane segments spans residues 768-788 (LAALVILFRCFSCCMPFLLVA) and 789-809 (GVCLGKVDAFEHATTVPNVPG). At 810–1205 (IPYKALVERA…QAAVSKTSWN (396 aa)) the chain is on the extracellular side. Cystine bridges form between Cys-846/Cys-911, Cys-859/Cys-891, Cys-860/Cys-893, and Cys-865/Cys-875. The interval 881–898 (VYPFMWGGAQCFCDSENT) is E1 fusion peptide loop. 3 N-linked (GlcNAc...) asparagine; by host glycosylation sites follow: Asn-936, Asn-1042, and Asn-1067. 4 cysteine pairs are disulfide-bonded: Cys-1056/Cys-1068, Cys-1098/Cys-1173, Cys-1103/Cys-1177, and Cys-1125/Cys-1167. The helical transmembrane segment at 1206-1226 (WLLALFGGASSLIVVGLIVLV) threads the bilayer. Residues 1227–1236 (CSSMLINTRR) are Cytoplasmic-facing.

As to quaternary structure, homodimer. Homomultimer. Interacts with host karyopherin KPNA4; this interaction allows the nuclear import of the viral capsid protein. Interacts with spike glycoprotein E2. Interacts with host IRAK1; the interaction leads to inhibition of IRAK1-dependent signaling. Part of a tetrameric complex composed of host CRM1, host importin alpha/beta dimer and the viral capsid; this complex blocks the receptor-mediated transport through the nuclear pore. Interacts with host phosphatase PPP1CA; this interaction dephosphorylates the capsid protein, which increases its ability to bind to the viral genome. The precursor of protein E3/E2 and E1 form a heterodimer shortly after synthesis. In terms of assembly, interacts with spike glycoprotein E2. The precursor of protein E3/E2 and E1 form a heterodimer shortly after synthesis. Processing of the precursor of protein E3/E2 into E2 and E3 results in a heterodimer of the spike glycoproteins E2 and E1. Spike at virion surface are constituted of three E2-E1 heterodimers. After target cell attachment and endocytosis, E1 change conformation to form homotrimers. Interacts with 6K protein. As to quaternary structure, interacts with spike glycoprotein E1. Processing of the precursor of protein E3/E2 into E2 and E3 results in a heterodimer of the spike glycoproteins E2 and E1. Spike at virion surface are constituted of a trimer of E2-E1 heterodimers. Interacts with 6K protein. The E2-E1 heterodimer interacts with host PCDH10 (via domain Cadherin 1); this interaction mediates viral entry to the host cell. Oligomer. Interacts with spike glycoprotein E1. Interacts with spike glycoprotein E2. In terms of processing, structural polyprotein: Specific enzymatic cleavages in vivo yield mature proteins. Capsid protein is auto-cleaved during polyprotein translation, unmasking a signal peptide at the N-terminus of the precursor of E3/E2. The remaining polyprotein is then targeted to the host endoplasmic reticulum, where host signal peptidase cleaves it into pE2, 6K and E1 proteins. pE2 is further processed to mature E3 and E2 by host furin in trans-Golgi vesicle. Phosphorylated on serine and threonine residues. Post-translationally, palmitoylated via thioester bonds. These palmitoylations may induce disruption of the C-terminus transmembrane. This would result in the reorientation of E2 C-terminus from lumenal to cytoplasmic side. In terms of processing, N-glycosylated. Palmitoylated via thioester bonds.

Its subcellular location is the virion. The protein resides in the host cytoplasm. The protein localises to the host cell membrane. It localises to the host nucleus. It is found in the virion membrane. Its subcellular location is the host Golgi apparatus. The protein resides in the host trans-Golgi network. The protein localises to the host endoplasmic reticulum. The catalysed reaction is Autocatalytic release of the core protein from the N-terminus of the togavirus structural polyprotein by hydrolysis of a -Trp-|-Ser- bond.. In terms of biological role, forms an icosahedral capsid with a T=4 symmetry composed of 240 copies of the capsid protein surrounded by a lipid membrane through which penetrate 80 spikes composed of trimers of E1-E2 heterodimers. The capsid protein binds to the viral RNA genome at a site adjacent to a ribosome binding site for viral genome translation following genome release. Possesses a protease activity that results in its autocatalytic cleavage from the nascent structural protein. Following its self-cleavage, the capsid protein transiently associates with ribosomes, and within several minutes the protein binds to viral RNA and rapidly assembles into icosahedric core particles. The resulting nucleocapsid eventually associates with the cytoplasmic domain of the spike glycoprotein E2 at the cell membrane, leading to budding and formation of mature virions. In case of infection, new virions attach to target cells and after clathrin-mediated endocytosis their membrane fuses with the host endosomal membrane. This leads to the release of the nucleocapsid into the cytoplasm, followed by an uncoating event necessary for the genomic RNA to become accessible. The uncoating might be triggered by the interaction of capsid proteins with ribosomes. Binding of ribosomes would release the genomic RNA since the same region is genomic RNA-binding and ribosome-binding. Specifically inhibits interleukin-1 receptor-associated kinase 1/IRAK1-dependent signaling during viral entry, representing a means by which the alphaviruses may evade innate immune detection and activation prior to viral gene expression. Inhibits host transcription. Forms a tetrameric complex with XPO1/CRM1 and the nuclear import receptor importin. This complex blocks the central channel of host nuclear pores thereby inhibiting the receptor-mediated nuclear transport and thus the host mRNA and rRNA transcription. The inhibition of transcription is linked to a cytopathic effect on the host cell. Functionally, provides the signal sequence for the translocation of the precursor of protein E3/E2 to the host endoplasmic reticulum. Furin-cleaved E3 remains associated with spike glycoprotein E1 and mediates pH protection of the latter during the transport via the secretory pathway. After virion release from the host cell, the assembly protein E3 is gradually released in the extracellular space. Its function is as follows. Plays an essential role in viral attachment to target host cell, by binding to the cell receptor PCDH10. Some specific strains may also bind host receptors VLDLR and LRP8/APOER2. Synthesized as a pE2 precursor which is processed by furin at the cell membrane just before virion budding, giving rise to E2-E1 heterodimer. The pE2-E1 heterodimer is stable, whereas E2-E1 is unstable and dissociate at low pH. pE2 is processed at the last step, presumably to avoid E1 fusion activation before its final export to cell surface. E2 C-terminus contains a transitory transmembrane that would be disrupted by palmitoylation, resulting in reorientation of the C-terminal tail from lumenal to cytoplasmic side. This step is critical since E2 C-terminus is involved in budding by interacting with capsid proteins. This release of E2 C-terminus in cytoplasm occurs lately in protein export, and precludes premature assembly of particles at the endoplasmic reticulum membrane. Protein 6K: Acts as a viroporin that participates in virus glycoprotein processing and transport to the plasma membrane, cell permeabilization and budding of viral particles. Disrupts the calcium homeostasis of the cell, probably at the endoplasmic reticulum level resulting in the increased levels of cytoplasmic calcium. Because of its lipophilic properties, the 6K protein is postulated to influence the selection of lipids that interact with the transmembrane domains of the glycoproteins, which, in turn, affects the deformability of the bilayer required for the extreme curvature that occurs as budding proceeds. Present in low amount in virions, about 3% compared to viral glycoproteins. In terms of biological role, class II viral fusion protein. Fusion activity is inactive as long as E1 is bound to E2 in mature virion. After virus attachment to target cell receptor PCDH10 and endocytosis, acidification of the endosome induce dissociation of E1/E2 heterodimer and concomitant trimerization of the E1 subunits. This E1 trimer is fusion active, and promotes release of viral nucleocapsid in cytoplasm after endosome and viral membrane fusion. Efficient fusion requires the presence of cholesterol and sphingolipid in the target membrane. This is Structural polyprotein from Western equine encephalitis virus (WEEV).